A 231-amino-acid polypeptide reads, in one-letter code: Dihydropteridine reductase (231 aa).

6–30 is a binding site for NADP(+); it reads LVLGGSGALGAEVVKFFKSKSWNTI. Y138 serves as the catalytic Proton acceptor.

It belongs to the short-chain dehydrogenases/reductases (SDR) family. In terms of assembly, homodimer.

The catalysed reaction is 5,6,7,8-tetrahydropteridine + NAD(+) = 6,7-dihydropteridine + NADH + H(+). It catalyses the reaction 5,6,7,8-tetrahydropteridine + NADP(+) = 6,7-dihydropteridine + NADPH + H(+). Its function is as follows. The product of this enzyme, tetrahydrobiopterin (BH-4), is an essential cofactor for phenylalanine, tyrosine, and tryptophan hydroxylases. The sequence is that of Dihydropteridine reductase (qdpr) from Dictyostelium discoideum (Social amoeba).